The sequence spans 230 residues: Orotidine 5'-phosphate decarboxylase (230 aa).

Substrate contacts are provided by residues D11, K34, 61 to 70, T117, R179, Q188, G208, and R209; that span reads DLKLHDIPNT. K63 acts as the Proton donor in catalysis.

The protein belongs to the OMP decarboxylase family. Type 1 subfamily. As to quaternary structure, homodimer.

The enzyme catalyses orotidine 5'-phosphate + H(+) = UMP + CO2. The protein operates within pyrimidine metabolism; UMP biosynthesis via de novo pathway; UMP from orotate: step 2/2. Functionally, catalyzes the decarboxylation of orotidine 5'-monophosphate (OMP) to uridine 5'-monophosphate (UMP). This Streptococcus mutans serotype c (strain ATCC 700610 / UA159) protein is Orotidine 5'-phosphate decarboxylase.